A 419-amino-acid chain; its full sequence is Putative competence-damage inducible protein (419 aa).

This sequence belongs to the CinA family.

In Lysinibacillus sphaericus (strain C3-41), this protein is Putative competence-damage inducible protein.